Reading from the N-terminus, the 636-residue chain is TNFAIP3-interacting protein 1 (636 aa).

Residues 20-73 (EASAAFERLVKENSRLKEKMQGIKMLGELLEESQMEATRLRQKAEELVKDNELL) adopt a coiled-coil conformation. Over residues 61-71 (QKAEELVKDNE) the composition is skewed to basic and acidic residues. 2 disordered regions span residues 61–151 (QKAE…GPLP) and 252–283 (MSNGNKEGASGRPGSPKMEGTGKKAVAGQQQA). Residue serine 77 is modified to Phosphoserine. An interaction with Nef region spans residues 94–412 (SNVTASPTAP…SPLTRQREYQ (319 aa)). The span at 131–142 (EEQNSPESSSHA) shows a compositional bias: polar residues. Residues 196-258 (SKVHKNEQRT…KLLMSNGNKE (63 aa)) adopt a coiled-coil conformation. Phosphoserine is present on serine 284. A coiled-coil region spans residues 294–535 (VALGAAEKKV…RKAKASGERY (242 aa)). Positions 351–367 (DLEAEREQKQRDFDRKL) are interaction with Shigella flexneri ipah9.8. Serine 403 carries the phosphoserine modification. The required for inhibitory activity of TNF-induced NF-kappa-B activation stretch occupies residues 431-588 (TPPSSPPTAF…MEHPPPLPNS (158 aa)). Position 438 is a phosphothreonine (threonine 438). Serine 442 is subject to Phosphoserine. A ubiquitin-binding domain (UBD) region spans residues 452–510 (KQELVTQNELLKQQVKIFEEDFQRERSDRERMNEEKEELKKQVEKLQAQVTLSNAQLKA). The Nuclear localization signal signature appears at 524-530 (QKRKAKA). Position 552 is a phosphotyrosine (tyrosine 552). Arginine 571 carries the post-translational modification Asymmetric dimethylarginine. At arginine 599 the chain carries Asymmetric dimethylarginine; alternate. Omega-N-methylarginine; alternate is present on arginine 599. A disordered region spans residues 603-636 (GGVRNPNQSSQVMDPPTARPTEPESPKNDREGPQ). Residues 623 to 636 (TEPESPKNDREGPQ) show a composition bias toward basic and acidic residues. Serine 627 carries the post-translational modification Phosphoserine.

As to quaternary structure, interacts with TNFAIP3 and IKBKG (polyubiquitinated); facilitates TNFAIP3-mediated de-ubiquitination of NEMO/IKBKG. Interacts with polyubiquitin. Interacts with MAPK1, SELPLG and PIK3CD. Interacts with IRAK1 (polyubiquitinated). Interacts with MYD88; the interaction is indicative for participation in an activated TLR-signaling complex. Interacts with HIV-1 matrix protein. Interacts with TAX1BP1. (Microbial infection) Interacts with Shigella flexneri ipah9.8; the interaction promotes polyubiquitination of IKBKG. Phosphorylation at Tyr-552 by SRC-family kinases recruits phosphoinositide-3-kinase (PI3K) PIK3CD:p85 heterodimer which results in integrin activation and leukocyte adhesion to activated endothelium during inflammation. Ubiquitous. Strongly expressed in peripheral blood lymphocytes, spleen and skeletal muscle, and is weakly expressed in the brain. In peripheral blood mononucleocytes, isoform 4 is mainly expressed and isoform 1 and isoform 7 are almost not expressed. Expression of isoform 1 and isoform 7 increases in leukemic cells.

The protein resides in the cytoplasm. It localises to the nucleus. Functionally, inhibits NF-kappa-B activation and TNF-induced NF-kappa-B-dependent gene expression by regulating TAX1BP1 and A20/TNFAIP3-mediated deubiquitination of IKBKG; proposed to link A20/TNFAIP3 to ubiquitinated IKBKG. Involved in regulation of EGF-induced ERK1/ERK2 signaling pathway; blocks MAPK3/MAPK1 nuclear translocation and MAPK1-dependent transcription. Increases cell surface CD4(T4) antigen expression. Involved in the anti-inflammatory response of macrophages and positively regulates TLR-induced activation of CEBPB. Involved in the prevention of autoimmunity; this function implicates binding to polyubiquitin. Involved in leukocyte integrin activation during inflammation; this function is mediated by association with SELPLG and dependent on phosphorylation by SRC-family kinases. Interacts with HIV-1 matrix protein and is packaged into virions and overexpression can inhibit viral replication. May regulate matrix nuclear localization, both nuclear import of PIC (Preintegration complex) and export of GAG polyprotein and viral genomic RNA during virion production. In case of infection, promotes association of IKBKG with Shigella flexneri E3 ubiquitin-protein ligase ipah9.8 p which in turn promotes polyubiquitination of IKBKG leading to its proteasome-dependent degradation and thus is perturbing NF-kappa-B activation during bacterial infection. This is TNFAIP3-interacting protein 1 (TNIP1) from Homo sapiens (Human).